We begin with the raw amino-acid sequence, 1343 residues long: MLLNGKSFKIYDYDTQRTVIERIASVLRTIPKYLWYVNDAGNTKYTEEPNFIEETPNSITVINVILDIETQLLQSLSEFESRYSDWFIQSGNTGNSTEEESKEDLLKWFVIDFIRKNKNEGISEEHSILLLEEELKEGVGGREFDLNFPKKIWSDRSQIEKDYNKNVKENRTLSAQNEKRFKDLDKMPKASEEFSKFVVEKIKVSFTVTNYQTSMLSLFNIIDINKVEDSENSLFRIVTVTTANFFKINGLIDISEYKRIDPSQLIENSSSCIDNVLNIIIMNEPKQKREGKQSKRPEFIDITVKPNNESLLIEFDLSISIYNSEEDRNILKNYLIETLFPQNLGENLGENLGENLGGSQSLTPRFPEGKRRSQFPELKVGPTLENKVKGSYYIINRYFQKEIFLDMIMNDPDFSILYVDERFKVSKQQSRLYVYFVTTKTGVVAFSLLNQVILTENDPLFKIKTPDGKKLKVKVGTQYIKIRISSIENKLNIPFFQDHLNRLFSLYFKKYNSILQFYNLYIKITPGGLGIQDQQDINLNIDEPRINVPPRKKIGENTLAAQVPELFLPLYSRKCARAPRIVSEEEALELNQNNFQTIRFPIHSEGNLEPKIYACDHHKEHPYPGLKPNDLANKDTFKYLPCCYKTNPEHKRGSPYGNYYKGEALTKDMTDHELYKTPRIVPNKVFGILPTSIAKIFGKISQREIDEENDTTNYYRYGTMYGINSFIDAVARAIGNNQFENIYNERQTYISEIRKKMASESYIGLSRQETYDLNIEVVKKWIKSDQYFDPKRFLKIVEDYFDVTIFLFERNVGESIISKQEDDNFTITIDQISETVQKYGSGGQLSLPIHSTIGSYILRPLKNNIVFIYIHMGSEVDKVLYPQCETIIKYVTEQEPGRKKGTVKSLFHKHDHEVEVIKTLFDKLLLSYTSIMSGPNIPFTYEPINMILKDGYGLVLKEQFIDKSGKTRMLYASWVPKSSKTTLKEMLNEPAYFTIVTEPIHPLRLPIKQNKNKNENENLCIPLTDFHSLKTPIANHFEISPITNALVDDLMKIYNLNYKKASFKDYLCNASDYLKGQINGIKVRIYVSNSIEEMRRNDSTLLKYNKQRKISRILFEYVLYKFSQYIKSHNEYSKKEIFETFLLEKCLVDNSFIYKINQNFNVPFFTLFDNMFMVDSKIIFSSQNLMIRIMYNIYQLTVRKFNKVKELSNQTIMNTYFENLSDFNHNDNFFIVYGLNTFLRFVSETKQGELLLNTLQPFDGPRFFSSDDIEDGKIFSAFCYGSIDTAISNQLSDKDIDKTENGIIYIFDTINGYKAYQINYKGVKIVAFKVEDGDYYLTLKKTI.

The helical transmembrane segment at 432-449 (LYVYFVTTKTGVVAFSLL) threads the bilayer.

This sequence belongs to the IIV-6 295L family.

The protein localises to the membrane. This is an uncharacterized protein from Acheta domesticus (House cricket).